The sequence spans 302 residues: Phosphoribosylaminoimidazole-succinocarboxamide synthase (302 aa).

The protein belongs to the SAICAR synthetase family.

It carries out the reaction 5-amino-1-(5-phospho-D-ribosyl)imidazole-4-carboxylate + L-aspartate + ATP = (2S)-2-[5-amino-1-(5-phospho-beta-D-ribosyl)imidazole-4-carboxamido]succinate + ADP + phosphate + 2 H(+). Its pathway is purine metabolism; IMP biosynthesis via de novo pathway; 5-amino-1-(5-phospho-D-ribosyl)imidazole-4-carboxamide from 5-amino-1-(5-phospho-D-ribosyl)imidazole-4-carboxylate: step 1/2. This Cupriavidus taiwanensis (strain DSM 17343 / BCRC 17206 / CCUG 44338 / CIP 107171 / LMG 19424 / R1) (Ralstonia taiwanensis (strain LMG 19424)) protein is Phosphoribosylaminoimidazole-succinocarboxamide synthase.